Consider the following 323-residue polypeptide: Viral cathepsin (323 aa).

A signal peptide spans Met1–Ala18. Positions Tyr19 to Gly112 are cleaved as a propeptide — activation peptide. 3 disulfides stabilise this stretch: Cys133-Cys174, Cys167-Cys207, and Cys262-Cys310. The active site involves Cys136. N-linked (GlcNAc...) asparagine; by host glycosylation occurs at Asn158. Active-site residues include His269 and Asn289.

The protein belongs to the peptidase C1 family. Post-translationally, synthesized as an inactive proenzyme and activated by proteolytic removal of the inhibitory propeptide.

The catalysed reaction is Endopeptidase of broad specificity, hydrolyzing substrates of both cathepsin L and cathepsin B.. In terms of biological role, cysteine protease that plays an essential role in host liquefaction to facilitate horizontal transmission of the virus. May participate in the degradation of foreign protein expressed by the baculovirus system. The polypeptide is Viral cathepsin (VCATH) (Lepidoptera (butterflies and moths)).